Reading from the N-terminus, the 185-residue chain is Large ribosomal subunit protein uL5 (185 aa).

This sequence belongs to the universal ribosomal protein uL5 family. As to quaternary structure, part of the 50S ribosomal subunit; part of the 5S rRNA/L5/L18/L25 subcomplex. Contacts the 5S rRNA and the P site tRNA. Forms a bridge to the 30S subunit in the 70S ribosome.

Its function is as follows. This is one of the proteins that bind and probably mediate the attachment of the 5S RNA into the large ribosomal subunit, where it forms part of the central protuberance. In the 70S ribosome it contacts protein S13 of the 30S subunit (bridge B1b), connecting the 2 subunits; this bridge is implicated in subunit movement. Contacts the P site tRNA; the 5S rRNA and some of its associated proteins might help stabilize positioning of ribosome-bound tRNAs. This chain is Large ribosomal subunit protein uL5, found in Rhodopseudomonas palustris (strain HaA2).